Reading from the N-terminus, the 349-residue chain is Myocyte-specific enhancer factor 2B (349 aa).

The MADS-box domain maps to 3 to 57 (RKKIQISRILDQRNRQVTFTKRKFGLMKKAYELSVLCDCDIALIIFNSAQRLFQY). A DNA-binding region (mef2-type) is located at residues 58 to 86 (ASSDMDRVLLKYTEYSEPHESRTNADILQ). Disordered stretches follow at residues 237-317 (GSFA…DFPR) and 330-349 (AEPL…SWPR).

Belongs to the MEF2 family. In terms of assembly, heterodimer. Interacts with HDAC9. Interacts with HDAC7. In terms of tissue distribution, highest expression found in embryonic heart and skeletal muscle. Low levels found in adult spleen, lung and testis while no expression is found in adult heart, brain or skeletal muscle.

The protein localises to the nucleus. In terms of biological role, transcriptional activator which binds specifically to the MEF2 element, 5'-YTA[AT](4)TAR-3', found in numerous muscle-specific genes. Activates transcription via this element. May be involved in muscle-specific and/or growth factor-related transcription. The chain is Myocyte-specific enhancer factor 2B (Mef2b) from Mus musculus (Mouse).